A 132-amino-acid chain; its full sequence is Fluoride-specific ion channel FluC 2 (132 aa).

4 consecutive transmembrane segments (helical) span residues 5–25, 34–54, 59–79, and 95–115; these read VAVF…NLLG, TFIE…FFAA, PLVQ…MSAF, and VLYL…GIVI. 2 residues coordinate Na(+): G71 and T74.

The protein belongs to the fluoride channel Fluc/FEX (TC 1.A.43) family.

Its subcellular location is the cell membrane. It catalyses the reaction fluoride(in) = fluoride(out). With respect to regulation, na(+) is not transported, but it plays an essential structural role and its presence is essential for fluoride channel function. In terms of biological role, fluoride-specific ion channel. Important for reducing fluoride concentration in the cell, thus reducing its toxicity. The polypeptide is Fluoride-specific ion channel FluC 2 (Bacillus licheniformis (strain ATCC 14580 / DSM 13 / JCM 2505 / CCUG 7422 / NBRC 12200 / NCIMB 9375 / NCTC 10341 / NRRL NRS-1264 / Gibson 46)).